A 125-amino-acid polypeptide reads, in one-letter code: UPF0251 protein Dhaf_1981 (125 aa).

Belongs to the UPF0251 family.

The polypeptide is UPF0251 protein Dhaf_1981 (Desulfitobacterium hafniense (strain DSM 10664 / DCB-2)).